A 316-amino-acid polypeptide reads, in one-letter code: 4-hydroxy-3-methylbut-2-enyl diphosphate reductase (316 aa).

Residue Cys-12 participates in [4Fe-4S] cluster binding. Positions 41 and 74 each coordinate (2E)-4-hydroxy-3-methylbut-2-enyl diphosphate. Residues His-41 and His-74 each contribute to the dimethylallyl diphosphate site. Positions 41 and 74 each coordinate isopentenyl diphosphate. Cys-96 contacts [4Fe-4S] cluster. Residue His-124 participates in (2E)-4-hydroxy-3-methylbut-2-enyl diphosphate binding. His-124 contributes to the dimethylallyl diphosphate binding site. Position 124 (His-124) interacts with isopentenyl diphosphate. The Proton donor role is filled by Glu-126. Thr-167 provides a ligand contact to (2E)-4-hydroxy-3-methylbut-2-enyl diphosphate. [4Fe-4S] cluster is bound at residue Cys-197. Positions 225, 226, 227, and 269 each coordinate (2E)-4-hydroxy-3-methylbut-2-enyl diphosphate. Positions 225, 226, 227, and 269 each coordinate dimethylallyl diphosphate. Residues Ser-225, Ser-226, Asn-227, and Ser-269 each coordinate isopentenyl diphosphate.

Belongs to the IspH family. As to quaternary structure, homodimer. It depends on [4Fe-4S] cluster as a cofactor.

It catalyses the reaction isopentenyl diphosphate + 2 oxidized [2Fe-2S]-[ferredoxin] + H2O = (2E)-4-hydroxy-3-methylbut-2-enyl diphosphate + 2 reduced [2Fe-2S]-[ferredoxin] + 2 H(+). It carries out the reaction dimethylallyl diphosphate + 2 oxidized [2Fe-2S]-[ferredoxin] + H2O = (2E)-4-hydroxy-3-methylbut-2-enyl diphosphate + 2 reduced [2Fe-2S]-[ferredoxin] + 2 H(+). The protein operates within isoprenoid biosynthesis; dimethylallyl diphosphate biosynthesis; dimethylallyl diphosphate from (2E)-4-hydroxy-3-methylbutenyl diphosphate: step 1/1. It participates in isoprenoid biosynthesis; isopentenyl diphosphate biosynthesis via DXP pathway; isopentenyl diphosphate from 1-deoxy-D-xylulose 5-phosphate: step 6/6. In terms of biological role, catalyzes the conversion of 1-hydroxy-2-methyl-2-(E)-butenyl 4-diphosphate (HMBPP) into a mixture of isopentenyl diphosphate (IPP) and dimethylallyl diphosphate (DMAPP). Acts in the terminal step of the DOXP/MEP pathway for isoprenoid precursor biosynthesis. The polypeptide is 4-hydroxy-3-methylbut-2-enyl diphosphate reductase (Enterobacter sp. (strain 638)).